A 505-amino-acid chain; its full sequence is Protein phosphatase 1J (505 aa).

The interval 1–103 (MLNRVRSAVA…PPDTGRRLPW (103 aa)) is disordered. Residues 27–50 (DLPNAASAPPAAAPEAPRSPPAKA) show a composition bias toward low complexity. 2 positions are modified to phosphoserine: S66 and S76. Residues 104-498 (STGYAEVINA…DDISVFVIPL (395 aa)) form the PPM-type phosphatase domain.

The protein belongs to the PP2C family. As to quaternary structure, interacts with UBE2I/UBC9.

It catalyses the reaction O-phospho-L-seryl-[protein] + H2O = L-seryl-[protein] + phosphate. The catalysed reaction is O-phospho-L-threonyl-[protein] + H2O = L-threonyl-[protein] + phosphate. This Homo sapiens (Human) protein is Protein phosphatase 1J (PPM1J).